We begin with the raw amino-acid sequence, 491 residues long: Cadherin-3 (491 aa).

Cadherin domains follow at residues 1 to 102 (ENTV…PPVF), 103 to 208 (VPPS…DHGP), and 209 to 314 (VPEP…DPWT). Over 1–316 (ENTVSHEVQR…VTCRDPWTWG (316 aa)) the chain is Extracellular. A glycan (N-linked (GlcNAc...) asparagine) is linked at N228. The chain crosses the membrane as a helical span at residues 317 to 339 (FLLPILGAALALLLLLLVLLFLV). The Cytoplasmic segment spans residues 340–491 (RKKRKIKEPL…ADMYGGGQDD (152 aa)).

Interacts with CDCP1 and CTNNB1.

The protein localises to the cell membrane. Functionally, cadherins are calcium-dependent cell adhesion proteins. They preferentially interact with themselves in a homophilic manner in connecting cells; cadherins may thus contribute to the sorting of heterogeneous cell types. This Bos taurus (Bovine) protein is Cadherin-3 (CDH3).